A 271-amino-acid polypeptide reads, in one-letter code: Phosphoglycerate mutase-like protein (271 aa).

His-22 acts as the Tele-phosphohistidine intermediate in catalysis. Glu-134 serves as the catalytic Proton donor/acceptor. The segment at 252–271 (SAETTNYPGKVPEGLDNPSG) is disordered.

It belongs to the phosphoglycerate mutase family. As to expression, expressed in the shoot apical meristem and meristematic zone of the root tips.

In terms of biological role, may play a role in carbohydrates metabolism. This Arabidopsis thaliana (Mouse-ear cress) protein is Phosphoglycerate mutase-like protein.